The sequence spans 479 residues: MVLAELGGRITRAIQQMNNVTIIDEKVLNDFLNEITRALLQSDVSFGLVEKMQTNIKKIVNLDDLAAGHNKRLIIEQAIFKELCRMLDPGKPAFAPKKAKPSVVMFVGLQGAGKTTTCTKYAYYHQKKGYKAALVCADTFRAGAFDQLKQNATKAKIPFYGSYTESDPVKIAVEGVDRFKKEKCDLIIVDTSGRHKQAASLFEEMRQVAEATEPDLVIFVMDSSIGQAAFEQAEAFKETVSVGAVIITKMDGHAKGGGALSAVAATKSPVIFIGTGEHMDEFEVFDVKPFVSRLLGKGDWSGLVDKLQEVVPKDLQNELVENLSQGNFTLRSMYDQFQCSLRIPLNQLFSMLPGISAEMMPKGHGEESRVKMKRYMTMMDSMTNKELDSPNPKIFNESRIMRIARGSGRLVREVMEMLEEYKRIAKTMKGIKIPKNGDMSKVIPPQMLKQMGGMSGLQSLMKQMGSAKDMMGMFGGGGK.

Positions 1–295 (MVLAELGGRI…DVKPFVSRLL (295 aa)) are G-domain. Residues 108–115 (GLQGAGKT), 190–194 (DTSGR), and 248–251 (TKMD) each bind GTP. Positions 296 to 479 (GKGDWSGLVD…MMGMFGGGGK (184 aa)) are M-domain.

The protein belongs to the GTP-binding SRP family. SRP54 subfamily. As to quaternary structure, component of a signal recognition particle (SRP) complex that consists of a 7SL RNA molecule of 300 nucleotides and six protein subunits: SRP72, SRP68, SRP54, SRP19, SRP14 and SRP9.

The protein resides in the cytoplasm. Its subcellular location is the endoplasmic reticulum. The enzyme catalyses GTP + H2O = GDP + phosphate + H(+). In terms of biological role, component of the signal recognition particle (SRP) complex, a ribonucleoprotein complex that mediates the cotranslational targeting of secretory and membrane proteins to the endoplasmic reticulum (ER). As part of the SRP complex, associates with the SRP receptor (SR) component SRPRA to target secretory proteins to the endoplasmic reticulum membrane. Binds to the signal sequence of presecretory proteins when they emerge from the ribosomes. Displays basal GTPase activity, and stimulates reciprocal GTPase activation of the SR subunit SRPRA. Forms a guanosine 5'-triphosphate (GTP)-dependent complex with the SR subunit SRPRA. SR compaction and GTPase mediated rearrangement of SR drive SRP-mediated cotranslational protein translocation into the ER. Requires the presence of SRP9/SRP14 and/or SRP19 to stably interact with RNA. The polypeptide is Signal recognition particle subunit SRP54 1 (SRP-54A) (Arabidopsis thaliana (Mouse-ear cress)).